Reading from the N-terminus, the 229-residue chain is Orotidine 5'-phosphate decarboxylase (229 aa).

Residues Asp10, Lys32, 59–68 (DLKFHDIPNT), Thr119, Arg180, Gln189, Gly209, and Arg210 each bind substrate. The active-site Proton donor is the Lys61.

The protein belongs to the OMP decarboxylase family. Type 1 subfamily. As to quaternary structure, homodimer.

It catalyses the reaction orotidine 5'-phosphate + H(+) = UMP + CO2. Its pathway is pyrimidine metabolism; UMP biosynthesis via de novo pathway; UMP from orotate: step 2/2. Functionally, catalyzes the decarboxylation of orotidine 5'-monophosphate (OMP) to uridine 5'-monophosphate (UMP). This Legionella pneumophila (strain Lens) protein is Orotidine 5'-phosphate decarboxylase.